Consider the following 523-residue polypeptide: Synaptotagmin-10 (523 aa).

Residues 1–55 (MSFRKEDGVSSLCQKALHIITELCFAGQVEWDKCSGIFPADRSGQGGGGTDISVS) lie on the Vesicular side of the membrane. A cysteine motif region spans residues 13 to 35 (CQKALHIITELCFAGQVEWDKCS). The helical transmembrane segment at 56 to 76 (LLAVVVSFCGLALLVVSLFVF) threads the bilayer. The Cytoplasmic portion of the chain corresponds to 77-523 (WKLCWPCWKS…CSSPRPPSTP (447 aa)). T136 carries the post-translational modification Phosphothreonine. C2 domains lie at 231–352 (TCGK…TVWK) and 363–496 (DLGE…THWH). D262, D268, D320, F321, D322, S325, D328, D394, D400, D454, and D456 together coordinate Ca(2+).

Belongs to the synaptotagmin family. In terms of assembly, homodimer; disulfide-linked via the cysteine motif. Can also form heterodimers with SYT3, SYT6, SYT7 and SYT9. It depends on Ca(2+) as a cofactor.

It localises to the cytoplasmic vesicle. The protein localises to the secretory vesicle membrane. Functionally, ca(2+) sensor specifically required for the Ca(2+)-dependent exocytosis of secretory vesicles containing IGF1 in neurons of the olfactory bulb. Exocytosis of IGF1 is required for sensory perception of smell. Not involved in Ca(2+)-dependent synaptic vesicle exocytosis. Acts through Ca(2+) and phospholipid binding to the C2 domain: Ca(2+) induces binding of the C2-domains to phospholipid membranes and to assembled SNARE-complexes; both actions contribute to triggering exocytosis. This is Synaptotagmin-10 (Syt10) from Rattus norvegicus (Rat).